Here is a 145-residue protein sequence, read N- to C-terminus: D-aminoacyl-tRNA deacylase (145 aa).

Positions 137–138 match the Gly-cisPro motif, important for rejection of L-amino acids motif; the sequence is GP.

Belongs to the DTD family. As to quaternary structure, homodimer.

Its subcellular location is the cytoplasm. The catalysed reaction is glycyl-tRNA(Ala) + H2O = tRNA(Ala) + glycine + H(+). The enzyme catalyses a D-aminoacyl-tRNA + H2O = a tRNA + a D-alpha-amino acid + H(+). Functionally, an aminoacyl-tRNA editing enzyme that deacylates mischarged D-aminoacyl-tRNAs. Also deacylates mischarged glycyl-tRNA(Ala), protecting cells against glycine mischarging by AlaRS. Acts via tRNA-based rather than protein-based catalysis; rejects L-amino acids rather than detecting D-amino acids in the active site. By recycling D-aminoacyl-tRNA to D-amino acids and free tRNA molecules, this enzyme counteracts the toxicity associated with the formation of D-aminoacyl-tRNA entities in vivo and helps enforce protein L-homochirality. The protein is D-aminoacyl-tRNA deacylase of Cereibacter sphaeroides (strain ATCC 17029 / ATH 2.4.9) (Rhodobacter sphaeroides).